A 236-amino-acid polypeptide reads, in one-letter code: UPF0280 protein Mlab_0453 (236 aa).

This sequence belongs to the UPF0280 family.

The chain is UPF0280 protein Mlab_0453 from Methanocorpusculum labreanum (strain ATCC 43576 / DSM 4855 / Z).